The chain runs to 98 residues: Large ribosomal subunit protein uL23 (98 aa).

The protein belongs to the universal ribosomal protein uL23 family. In terms of assembly, part of the 50S ribosomal subunit. Contacts protein L29, and trigger factor when it is bound to the ribosome.

Its function is as follows. One of the early assembly proteins it binds 23S rRNA. One of the proteins that surrounds the polypeptide exit tunnel on the outside of the ribosome. Forms the main docking site for trigger factor binding to the ribosome. The sequence is that of Large ribosomal subunit protein uL23 from Clostridium beijerinckii (strain ATCC 51743 / NCIMB 8052) (Clostridium acetobutylicum).